A 421-amino-acid chain; its full sequence is Serine--tRNA ligase (421 aa).

229-231 (TAE) contacts L-serine. An ATP-binding site is contributed by 260–262 (RSE). Glu283 is an L-serine binding site. 347–350 (EISS) is a binding site for ATP. Ser382 lines the L-serine pocket.

This sequence belongs to the class-II aminoacyl-tRNA synthetase family. Type-1 seryl-tRNA synthetase subfamily. In terms of assembly, homodimer. The tRNA molecule binds across the dimer.

The protein localises to the cytoplasm. The catalysed reaction is tRNA(Ser) + L-serine + ATP = L-seryl-tRNA(Ser) + AMP + diphosphate + H(+). The enzyme catalyses tRNA(Sec) + L-serine + ATP = L-seryl-tRNA(Sec) + AMP + diphosphate + H(+). Its pathway is aminoacyl-tRNA biosynthesis; selenocysteinyl-tRNA(Sec) biosynthesis; L-seryl-tRNA(Sec) from L-serine and tRNA(Sec): step 1/1. Catalyzes the attachment of serine to tRNA(Ser). Is also able to aminoacylate tRNA(Sec) with serine, to form the misacylated tRNA L-seryl-tRNA(Sec), which will be further converted into selenocysteinyl-tRNA(Sec). This Symbiobacterium thermophilum (strain DSM 24528 / JCM 14929 / IAM 14863 / T) protein is Serine--tRNA ligase.